A 111-amino-acid polypeptide reads, in one-letter code: Large ribosomal subunit protein uL23 (111 aa).

The protein belongs to the universal ribosomal protein uL23 family. Part of the 50S ribosomal subunit. Contacts protein L29, and trigger factor when it is bound to the ribosome.

One of the early assembly proteins it binds 23S rRNA. One of the proteins that surrounds the polypeptide exit tunnel on the outside of the ribosome. Forms the main docking site for trigger factor binding to the ribosome. This is Large ribosomal subunit protein uL23 from Chlamydia muridarum (strain MoPn / Nigg).